The chain runs to 49 residues: Large ribosomal subunit protein bL33 (49 aa).

This sequence belongs to the bacterial ribosomal protein bL33 family.

This is Large ribosomal subunit protein bL33 from Lactobacillus acidophilus (strain ATCC 700396 / NCK56 / N2 / NCFM).